The primary structure comprises 181 residues: Inner membrane-spanning protein YciB (181 aa).

The next 5 helical transmembrane spans lie at 8-28, 53-73, 76-96, 121-141, and 149-169; these read FPII…ATAA, ITLI…NAIF, WKPT…HFFG, LSWA…VYNF, and FKLF…AFYI.

Belongs to the YciB family.

The protein resides in the cell inner membrane. Plays a role in cell envelope biogenesis, maintenance of cell envelope integrity and membrane homeostasis. The sequence is that of Inner membrane-spanning protein YciB from Coxiella burnetii (strain CbuG_Q212) (Coxiella burnetii (strain Q212)).